The sequence spans 63 residues: DNA gyrase inhibitor YacG (63 aa).

Positions 9, 12, 28, and 32 each coordinate Zn(2+).

The protein belongs to the DNA gyrase inhibitor YacG family. Interacts with GyrB. The cofactor is Zn(2+).

In terms of biological role, inhibits all the catalytic activities of DNA gyrase by preventing its interaction with DNA. Acts by binding directly to the C-terminal domain of GyrB, which probably disrupts DNA binding by the gyrase. The protein is DNA gyrase inhibitor YacG of Salmonella paratyphi A (strain AKU_12601).